Reading from the N-terminus, the 291-residue chain is Phosphoribosylaminoimidazole-succinocarboxamide synthase (291 aa).

Belongs to the SAICAR synthetase family.

The enzyme catalyses 5-amino-1-(5-phospho-D-ribosyl)imidazole-4-carboxylate + L-aspartate + ATP = (2S)-2-[5-amino-1-(5-phospho-beta-D-ribosyl)imidazole-4-carboxamido]succinate + ADP + phosphate + 2 H(+). Its pathway is purine metabolism; IMP biosynthesis via de novo pathway; 5-amino-1-(5-phospho-D-ribosyl)imidazole-4-carboxamide from 5-amino-1-(5-phospho-D-ribosyl)imidazole-4-carboxylate: step 1/2. The protein is Phosphoribosylaminoimidazole-succinocarboxamide synthase (ADE1) of Candida albicans (Yeast).